The following is a 161-amino-acid chain: Alpha-crystallin A chain (161 aa).

Residues 1–51 (ALGPFYPSRXXXXXXXXXXXXXXXXXXXXXXXXXXXXQSLFRTVLDSGISE) are required for complex formation with BFSP1 and BFSP2. Gln38 carries the post-translational modification Deamidated glutamine; partial. The region spanning 40–150 (LFRTVLDSGI…SHSERAIPVS (111 aa)) is the sHSP domain. Residue Lys87 is modified to N6-acetyllysine. His88 is a Zn(2+) binding site. Asn89 is modified (deamidated asparagine; partial). Zn(2+) contacts are provided by Glu90 and His95. The residue at position 110 (Ser110) is a Phosphoserine. Deamidated asparagine; partial is present on Asn111. A disulfide bridge links Cys119 with Cys130. The residue at position 135 (Gln135) is a Deamidated glutamine; partial. A disordered region spans residues 140–161 (ASHSERAIPVSREEKPSSAPSS). Positions 141 to 155 (SHSERAIPVSREEKP) are enriched in basic and acidic residues. His142 contacts Zn(2+). Ser150 carries an O-linked (GlcNAc) serine glycan.

Belongs to the small heat shock protein (HSP20) family. As to quaternary structure, heteromer composed of three CRYAA and one CRYAB subunits. Inter-subunit bridging via zinc ions enhances stability, which is crucial as there is no protein turn over in the lens. Can also form homodimers and homotetramers (dimers of dimers) which serve as the building blocks of homooligomers. Within homooligomers, the zinc-binding motif is created from residues of 3 different molecules. His-88 and Glu-90 from one molecule are ligands of the zinc ion, and His-95 and His-142 residues from additional molecules complete the site with tetrahedral coordination geometry. Part of a complex required for lens intermediate filament formation composed of BFSP1, BFSP2 and CRYAA. Undergoes age-dependent proteolytical cleavage at the C-terminus.

The protein localises to the cytoplasm. It localises to the nucleus. Its function is as follows. Contributes to the transparency and refractive index of the lens. In its oxidized form (absence of intramolecular disulfide bond), acts as a chaperone, preventing aggregation of various proteins under a wide range of stress conditions. Required for the correct formation of lens intermediate filaments as part of a complex composed of BFSP1, BFSP2 and CRYAA. The protein is Alpha-crystallin A chain (CRYAA) of Galegeeska rufescens (East African rufous sengi).